Consider the following 223-residue polypeptide: Small ribosomal subunit protein uS3 (223 aa).

A KH type-2 domain is found at 39 to 108 (IRNFVKKNSY…NILINIVEVK (70 aa)).

This sequence belongs to the universal ribosomal protein uS3 family. As to quaternary structure, part of the 30S ribosomal subunit. Forms a tight complex with proteins S10 and S14.

In terms of biological role, binds the lower part of the 30S subunit head. Binds mRNA in the 70S ribosome, positioning it for translation. The polypeptide is Small ribosomal subunit protein uS3 (Clostridium botulinum (strain Okra / Type B1)).